The following is a 162-amino-acid chain: Tegument protein BLRF2 (162 aa).

Residues 12–43 are a coiled coil; the sequence is VKAVDMSMEDMAARLARLESENKALKQQVLRG. The tract at residues 121 to 162 is disordered; the sequence is GAKGQPSPGEGTRLRESNDPNATRRARSRSRGREAKKVQISD. The span at 151–162 shows a compositional bias: basic and acidic residues; it reads RGREAKKVQISD.

The protein belongs to the herpesviridae BLRF2 family. In terms of assembly, homooligomer; homooligomerizes and binds double-stranded DNA (dsDNA) cooperatively. Interacts with host CGAS.

The protein resides in the virion tegument. It localises to the host cytoplasm. Functionally, plays a role in the inhibition of host innate immune system by targeting the CGAS enzymatic activity which is the principal cytosolic DNA sensor that detects invading viral DNA. Acts by inhibiting CGAS-DNA phase separation: directly binds double-stranded DNA (dsDNA) in a length dependent but sequence independent manner and is able to form DNA-induced phase separation in infected cells. DNA phase separation of ORF52 mediates disruption of liquid-like droplets in which CGAS is activated, thereby preventing CGAS activity. The polypeptide is Tegument protein BLRF2 (Epstein-Barr virus (strain GD1) (HHV-4)).